The primary structure comprises 507 residues: Maturase K (507 aa).

It belongs to the intron maturase 2 family. MatK subfamily.

It is found in the plastid. It localises to the chloroplast. Its function is as follows. Usually encoded in the trnK tRNA gene intron. Probably assists in splicing its own and other chloroplast group II introns. This Persea americana (Avocado) protein is Maturase K.